The primary structure comprises 76 residues: MNCETKQRTQFECIYFSQYWAKGDFIAKRAPIGQWEPYSEESLLGIIVTSVCRIKVAMLKPEPPRDPHIPLMGDFN.

This is an uncharacterized protein from Escherichia coli (strain K12).